The sequence spans 480 residues: Proline--tRNA ligase (480 aa).

It belongs to the class-II aminoacyl-tRNA synthetase family. ProS type 3 subfamily. In terms of assembly, homodimer.

Its subcellular location is the cytoplasm. The catalysed reaction is tRNA(Pro) + L-proline + ATP = L-prolyl-tRNA(Pro) + AMP + diphosphate. Catalyzes the attachment of proline to tRNA(Pro) in a two-step reaction: proline is first activated by ATP to form Pro-AMP and then transferred to the acceptor end of tRNA(Pro). The polypeptide is Proline--tRNA ligase (Pyrococcus horikoshii (strain ATCC 700860 / DSM 12428 / JCM 9974 / NBRC 100139 / OT-3)).